The following is a 209-amino-acid chain: NAD(P)H dehydrogenase (quinone) (209 aa).

The region spanning 4-199 (VNIIFYSMYG…AMARYQGRHV (196 aa)) is the Flavodoxin-like domain. Residues 10–15 (SMYGHV) and 87–89 (TRY) each bind FMN. Residue Y12 participates in NAD(+) binding. Substrate is bound at residue W107. FMN-binding positions include 122–128 (SSGTQHG) and H143.

Belongs to the WrbA family. Requires FMN as cofactor.

The catalysed reaction is a quinone + NADH + H(+) = a quinol + NAD(+). The enzyme catalyses a quinone + NADPH + H(+) = a quinol + NADP(+). This chain is NAD(P)H dehydrogenase (quinone), found in Methanosarcina acetivorans (strain ATCC 35395 / DSM 2834 / JCM 12185 / C2A).